The sequence spans 210 residues: Glutathione S-transferase P (210 aa).

Residues 2-81 (PPYTIVYFPV…HLGRTLGLYG (80 aa)) form the GST N-terminal domain. Tyrosine 4 bears the Phosphotyrosine; by EGFR mark. Glutathione-binding positions include tyrosine 8, arginine 14, tryptophan 39, lysine 45, and 52-53 (QL). Threonine 62 is subject to Phosphothreonine. 65 to 66 (QS) contacts glutathione. The GST C-terminal domain maps to 83–204 (DQQEAALVDM…ASPEHMNRPI (122 aa)). N6-succinyllysine occurs at positions 103 and 116. Lysine 128 bears the N6-acetyllysine mark.

This sequence belongs to the GST superfamily. Pi family. Homodimer. Interacts with CDK5.

It is found in the cytoplasm. It localises to the mitochondrion. The protein resides in the nucleus. It carries out the reaction RX + glutathione = an S-substituted glutathione + a halide anion + H(+). The enzyme catalyses prostaglandin J2 + glutathione = prostaglandin J2-S-(R)-glutathione. The catalysed reaction is prostaglandin J2 + glutathione = prostaglandin J2-S-(S)-glutathione. It catalyses the reaction prostaglandin A2 + glutathione = prostaglandin A2-S-(S)-glutathione. It carries out the reaction 11(S)-hydroxy-14(S),15(S)-epoxy-(5Z,8Z,12E)-eicosatrienoate + glutathione = (11S,15S)-dihydroxy-14(R)-S-glutathionyl-(5Z,8Z,12E)-eicosatrienoate. Conjugation of reduced glutathione to a wide number of exogenous and endogenous hydrophobic electrophiles. Involved in the formation of glutathione conjugates of both prostaglandin A2 (PGA2) and prostaglandin J2 (PGJ2). Participates in the formation of novel hepoxilin regioisomers. Negatively regulates CDK5 activity via p25/p35 translocation to prevent neurodegeneration. This chain is Glutathione S-transferase P (GSTP1), found in Bos taurus (Bovine).